A 1194-amino-acid chain; its full sequence is ATP-dependent RNA helicase DHX30 (1194 aa).

The segment covering 1–10 has biased composition (basic and acidic residues); it reads MFSLDSFRKD. Residues 1–27 form a disordered region; that stretch reads MFSLDSFRKDRAQHRQRQCKLPPPRLP. Serine 6 carries the phosphoserine modification. The region spanning 53 to 121 is the DRBM domain; it reads PKNLLNSVIG…QAAAAACQLF (69 aa). Positions 150–199 are disordered; sequence ADSWWRPEPTMPPTSWRQLNPESIRPGGPGGLSRSLGREEEEDEEEELEE. A compositionally biased stretch (acidic residues) spans 188–199; sequence EEEEDEEEELEE. Serine 226 and serine 380 each carry phosphoserine. The 169-residue stretch at 444-612 folds into the Helicase ATP-binding domain; the sequence is LNAIEQHPVV…FGGCPVIKVP (169 aa). 457-464 is an ATP binding site; that stretch reads GDTGCGKT. A DEAH box motif is present at residues 559 to 562; the sequence is DEVH. The Helicase C-terminal domain occupies 654–827; sequence LVTDLVLHID…NLVLQAKIHM (174 aa).

This sequence belongs to the DEAD box helicase family. DEAH subfamily. Identified in a complex with TFAM and SSBP1. Interacts (via N-terminus) with ZC3HAV1 (via N-terminal domain) in an RNA-independent manner. Found in a complex with GRSF1, DDX28, FASTKD2 and FASTKD5.

The protein resides in the cytoplasm. The protein localises to the mitochondrion. It is found in the mitochondrion matrix. It localises to the mitochondrion nucleoid. It carries out the reaction ATP + H2O = ADP + phosphate + H(+). Functionally, RNA-dependent helicase. Plays an important role in the assembly of the mitochondrial large ribosomal subunit. Required for optimal function of the zinc-finger antiviral protein ZC3HAV1. Associates with mitochondrial DNA. Involved in nervous system development and differentiation through its involvement in the up-regulation of a number of genes which are required for neurogenesis, including GSC, NCAM1, neurogenin, and NEUROD. This chain is ATP-dependent RNA helicase DHX30 (DHX30), found in Pongo abelii (Sumatran orangutan).